The chain runs to 206 residues: Musculin (206 aa).

Positions 1-115 are disordered; the sequence is MSTGSVSDPE…QSQRNAANAR (115 aa). Positions 46 to 56 are enriched in acidic residues; sequence SAEEEDPDGEE. A Nuclear localization signal motif is present at residues 71–76; that stretch reads KRKRPR. The segment covering 78-92 has biased composition (gly residues); the sequence is AGGGGAGGSAGGGGK. Positions 93–102 are enriched in low complexity; that stretch reads KPLPAKGSAA. In terms of domain architecture, bHLH spans 107–159; that stretch reads SQRNAANARERARMRVLSKAFSRLKTSLPWVPPDTKLSKLDTLRLASSYIAHL.

Efficient DNA binding requires dimerization with another bHLH protein. Binds DNA as a homodimer or a heterodimer. Forms a heterodimer with TCF3. As to expression, expressed in lymphoid tissues, B-cell lines and activated B-cells.

The protein resides in the nucleus. Functionally, transcription repressor capable of inhibiting the transactivation capability of TCF3/E47. May play a role in regulating antigen-dependent B-cell differentiation. The sequence is that of Musculin (MSC) from Homo sapiens (Human).